We begin with the raw amino-acid sequence, 81 residues long: Small ribosomal subunit protein bS16 (81 aa).

This sequence belongs to the bacterial ribosomal protein bS16 family.

This chain is Small ribosomal subunit protein bS16, found in Acetivibrio thermocellus (strain ATCC 27405 / DSM 1237 / JCM 9322 / NBRC 103400 / NCIMB 10682 / NRRL B-4536 / VPI 7372) (Clostridium thermocellum).